The primary structure comprises 481 residues: Threonine synthase (481 aa).

Lys118 bears the N6-(pyridoxal phosphate)lysine mark.

The protein belongs to the threonine synthase family. In terms of assembly, monomer. The cofactor is pyridoxal 5'-phosphate.

The enzyme catalyses O-phospho-L-homoserine + H2O = L-threonine + phosphate. It functions in the pathway amino-acid biosynthesis; L-threonine biosynthesis; L-threonine from L-aspartate: step 5/5. Its function is as follows. Catalyzes the gamma-elimination of phosphate from L-phosphohomoserine and the beta-addition of water to produce L-threonine. This is Threonine synthase (thrC) from Corynebacterium glutamicum (strain ATCC 13032 / DSM 20300 / JCM 1318 / BCRC 11384 / CCUG 27702 / LMG 3730 / NBRC 12168 / NCIMB 10025 / NRRL B-2784 / 534).